Here is a 229-residue protein sequence, read N- to C-terminus: tRNA (guanosine(18)-2'-O)-methyltransferase (229 aa).

Positions 96, 139, and 148 each coordinate S-adenosyl-L-methionine.

It belongs to the class IV-like SAM-binding methyltransferase superfamily. RNA methyltransferase TrmH family.

The catalysed reaction is guanosine(18) in tRNA + S-adenosyl-L-methionine = 2'-O-methylguanosine(18) in tRNA + S-adenosyl-L-homocysteine + H(+). In terms of biological role, catalyzes the 2'-O methylation of guanosine at position 18 in tRNA. The protein is tRNA (guanosine(18)-2'-O)-methyltransferase of Escherichia coli O157:H7.